A 716-amino-acid polypeptide reads, in one-letter code: ATP-dependent DNA helicase DinG (716 aa).

Residues 1 to 114 (MALTAALKAQ…PDLKFTAAFG (114 aa)) form an HD1 domain N-terminus region. Residues 17 to 294 (ALQEQIPDFI…TCMEQFRPKT (278 aa)) form the Helicase ATP-binding domain. Residues Ile-26, Gln-31, Lys-60, and Thr-61 each contribute to the ATP site. Residues 115–216 (RGRYVCPRNL…FFVARREIQE (102 aa)) are [4Fe-4S] domain. [4Fe-4S] cluster contacts are provided by Cys-120, Cys-194, Cys-199, and Cys-205. Positions 217 to 261 (AEVVVANHALVMAAMESEAVLPDPKNLLLVLDEGHHLPDVARDAL) are HD1 domain middle. The DEAH box signature appears at 248–251 (DEGH). Residues 262-438 (EMSAEITAPW…LHLWFHCVGI (177 aa)) form an arch domain region. Residues 439–491 (RVSDQLERLLWRSIPHIIVTSATLRSLNSFSRLQEMSGLKEKAGDRFVALDSP) are HD1 domain middle. The tract at residues 492-716 (FNHCEQGKIV…KTKSPRRRRR (225 aa)) is HD2 domain. Positions 599, 656, and 659 each coordinate ATP.

It belongs to the helicase family. DinG subfamily. Type 1 sub-subfamily. Monomer in solution. It depends on [4Fe-4S] cluster as a cofactor. Requires Mg(2+) as cofactor.

The catalysed reaction is Couples ATP hydrolysis with the unwinding of duplex DNA at the replication fork by translocating in the 5'-3' direction. This creates two antiparallel DNA single strands (ssDNA). The leading ssDNA polymer is the template for DNA polymerase III holoenzyme which synthesizes a continuous strand.. It carries out the reaction ATP + H2O = ADP + phosphate + H(+). ATPase activity is 15-fold stimulated by single-stranded DNA (ssDNA). Reduction of the [4Fe-4S] cluster reversibly switches off helicase activity. Remains fully active after exposure to 100-fold excess of hydrogen peroxide, but the [4Fe-4S] cluster can be efficiently modified by nitric oxide (NO), forming the DinG-bound dinitrosyl iron complex with the concomitant inactivation of helicase activity. Helicase activity on G-quadruplex DNA is inhibited by porphyrin derivatives meso-tetra (N-methyl-4-pyridyl) porphine tetra tosylate (T4) and N-methyl mesoporphyrin IX (NMM). Helicase activity on forked duplexes is not inhibited by T4 or NMM. G-quadruplex ligands such as Pyridostatin, PhenDC3, BRACO-19 and Netropsin can alter recognition and unwinding of G-quadruplex DNAs; the effect is both ligand- and G-quadruplex DNA-specific. DNA-dependent ATPase and 5'-3' DNA helicase. Can also unwind DNA:RNA hybrid duplexes. Is active on D-loops, R-loops, and on forked structures. Unwinds G-quadruplex DNA in a 5'-3' direction; unwinding efficiency differs on different substrates. Does not appear to unwind replication forks or Holliday junctions. Translocates on single-stranded (ss)DNA with a 5'-3' polarity. In vitro at high concentrations also unwinds in a 3'-5' direction. May be involved in recombinational DNA repair and the resumption of replication after DNA damage. The [4Fe-4S] cluster is redox active at cellular potentials and is involved in DNA-mediated charge-transport signaling between DNA repair proteins from distinct pathways. DinG cooperates at long-range with endonuclease III, a base excision repair enzyme, using DNA charge transport to redistribute to regions of DNA damage. Binds 10-11 nucleotides of ssDNA in a positively-charged groove across the helicase domains. The polypeptide is ATP-dependent DNA helicase DinG (Escherichia coli (strain K12)).